The sequence spans 401 residues: Tetracycline resistance protein, class B (401 aa).

The Cytoplasmic portion of the chain corresponds to 1-6 (MNSSTK). A helical transmembrane segment spans residues 7-30 (IALVITLLDAMGIGLIMPVLPTLL). Residues 31-42 (REFIASEDIANH) are Periplasmic-facing. A helical transmembrane segment spans residues 43-61 (FGVLLALYALMQVIFAPWL). Over 62–71 (GKMSDRFGRR) the chain is Cytoplasmic. A helical transmembrane segment spans residues 72–91 (PVLLLSLIGASLDYLLLAFS). At 92 to 98 (SALWMLY) the chain is on the periplasmic side. The helical transmembrane segment at 99–119 (LGRLLSGITGATGAVAASVIA) threads the bilayer. Over 120-129 (DTTSASQRVK) the chain is Cytoplasmic. Residues 130 to 152 (WFGWLGASFGLGLIAGPIIGGFA) form a helical membrane-spanning segment. Topologically, residues 153–158 (GEISPH) are periplasmic. The helical transmembrane segment at 159-178 (SPFFIAALLNIVTFLVVMFW) threads the bilayer. Residues 179-211 (FRETKNTRDNTDTEVGVETQSNSVYITLFKTMP) lie on the Cytoplasmic side of the membrane. The chain crosses the membrane as a helical span at residues 212 to 232 (ILLIIYFSAQLIGQIPATVWV). Residues 233–243 (LFTENRFGWNS) lie on the Periplasmic side of the membrane. The helical transmembrane segment at 244 to 265 (MMVGFSLAGLGLLHSVFQAFVA) threads the bilayer. The Cytoplasmic segment spans residues 266–275 (GRIATKWGEK). The helical transmembrane segment at 276–295 (TAVLLGFIADSSAFAFLAFI) threads the bilayer. Over 296-298 (SEG) the chain is Periplasmic. A helical membrane pass occupies residues 299 to 322 (WLVFPVLILLAGGGIALPALQGVM). Residues 323–332 (SIQTKSHQQG) are Cytoplasmic-facing. Residues 333–356 (ALQGLLVSLTNATGVIGPLLFAVI) form a helical membrane-spanning segment. The Periplasmic segment spans residues 357 to 365 (YNHSLPIWD). A helical transmembrane segment spans residues 366–387 (GWIWIIGLAFYCIIILLSMTFM). Topologically, residues 388–401 (LTPQAQGSKQETSA) are cytoplasmic.

It belongs to the major facilitator superfamily. TCR/Tet family.

It is found in the cell inner membrane. Its function is as follows. Resistance to tetracycline by an active tetracycline efflux. This is an energy-dependent process that decreases the accumulation of the antibiotic in whole cells. This protein functions as a metal-tetracycline/H(+) antiporter. This Escherichia coli protein is Tetracycline resistance protein, class B (tetA).